The primary structure comprises 138 residues: Protein PsiE homolog (138 aa).

4 consecutive transmembrane segments (helical) span residues 14 to 34 (LQAL…GLLI), 56 to 76 (YEML…ALII), 84 to 104 (HFPL…LIII), and 109 to 129 (AIST…FFIV).

It belongs to the PsiE family.

It localises to the cell membrane. This chain is Protein PsiE homolog, found in Bacillus velezensis (strain DSM 23117 / BGSC 10A6 / LMG 26770 / FZB42) (Bacillus amyloliquefaciens subsp. plantarum).